A 341-amino-acid polypeptide reads, in one-letter code: UDP-glucuronic acid decarboxylase 5 (341 aa).

The interval 1 to 21 is disordered; the sequence is MASSDKQTSPKPPPSPSPLRN. Residue 60-85 participates in NAD(+) binding; sequence DNYFTGSKDNLKKWIGHPRFELIRHD. Position 169 (Arg-169) interacts with substrate. Tyr-172 functions as the Proton acceptor in the catalytic mechanism. 172–176 provides a ligand contact to NAD(+); it reads YDEGK. Asn-201 is a binding site for substrate. Arg-213 serves as a coordination point for NAD(+). Substrate is bound by residues 214–218, 231–238, and 298–302; these read VVSNF, QKPGTQTR, and DPRQR.

This sequence belongs to the NAD(P)-dependent epimerase/dehydratase family. UDP-glucuronic acid decarboxylase subfamily. It depends on NAD(+) as a cofactor.

The protein localises to the cytoplasm. It carries out the reaction UDP-alpha-D-glucuronate + H(+) = UDP-alpha-D-xylose + CO2. It functions in the pathway nucleotide-sugar biosynthesis; UDP-alpha-D-xylose biosynthesis; UDP-alpha-D-xylose from UDP-alpha-D-glucuronate: step 1/1. Its function is as follows. Catalyzes the NAD-dependent decarboxylation of UDP-glucuronic acid to UDP-xylose. Necessary for the biosynthesis of the core tetrasaccharide in glycosaminoglycan biosynthesis. The sequence is that of UDP-glucuronic acid decarboxylase 5 (UXS5) from Arabidopsis thaliana (Mouse-ear cress).